Consider the following 497-residue polypeptide: Guanosine-5'-triphosphate,3'-diphosphate pyrophosphatase (497 aa).

Belongs to the GppA/Ppx family. GppA subfamily.

It carries out the reaction guanosine 3'-diphosphate 5'-triphosphate + H2O = guanosine 3',5'-bis(diphosphate) + phosphate + H(+). Its pathway is purine metabolism; ppGpp biosynthesis; ppGpp from GTP: step 2/2. In terms of biological role, catalyzes the conversion of pppGpp to ppGpp. Guanosine pentaphosphate (pppGpp) is a cytoplasmic signaling molecule which together with ppGpp controls the 'stringent response', an adaptive process that allows bacteria to respond to amino acid starvation, resulting in the coordinated regulation of numerous cellular activities. The sequence is that of Guanosine-5'-triphosphate,3'-diphosphate pyrophosphatase from Photobacterium profundum (strain SS9).